We begin with the raw amino-acid sequence, 136 residues long: Probable glycine cleavage system H protein 3 (136 aa).

The 82-residue stretch at 28–109 (MVTVGITSLG…PYDAWIVKIK (82 aa)) folds into the Lipoyl-binding domain. Position 69 is an N6-lipoyllysine (Lys-69).

It belongs to the GcvH family. As to quaternary structure, the glycine cleavage system is composed of four proteins: P, T, L and H. (R)-lipoate is required as a cofactor.

Functionally, the glycine cleavage system catalyzes the degradation of glycine. The H protein shuttles the methylamine group of glycine from the P protein to the T protein. The sequence is that of Probable glycine cleavage system H protein 3 from Sulfurisphaera tokodaii (strain DSM 16993 / JCM 10545 / NBRC 100140 / 7) (Sulfolobus tokodaii).